Here is a 649-residue protein sequence, read N- to C-terminus: Echinoderm microtubule-associated protein-like 2 (649 aa).

The interval 10-649 (KEVIFSVEDG…DTSVLQWRVV (640 aa)) is tandem atypical propeller in EMLs. 2 coiled-coil regions span residues 13-58 (IFSV…LKLE) and 73-114 (YLLP…LAIH). WD repeat units follow at residues 56–93 (KLEW…LYSV), 97–144 (RQRH…IWDS), 151–192 (HVLG…VWDW), 195–234 (ETKV…FWTL), 241–280 (KRQG…VWGK), 285–323 (ITQA…LWGS), 369–406 (FSLL…LWSS), 410–447 (QPLW…LLDT), 452–489 (LVAI…VYTV), 495–535 (KVSR…YWDP), 564–602 (FGIW…LFSY), and 609–648 (ALSH…QWRV).

The protein belongs to the WD repeat EMAP family. In terms of assembly, homotrimer; self-association is mediated by the N-terminal coiled coil. As to quaternary structure, interacts with GRID2 and may also interact with GRID1. Interacts with EML3. Binds unpolymerized tubulins via its WD repeat region. In terms of tissue distribution, ubiquitous.

Its subcellular location is the cytoplasm. It is found in the cytoskeleton. It localises to the spindle. Tubulin binding protein that inhibits microtubule nucleation and growth, resulting in shorter microtubules. The sequence is that of Echinoderm microtubule-associated protein-like 2 (EML2) from Homo sapiens (Human).